The sequence spans 303 residues: Sulfate adenylyltransferase subunit 2 (303 aa).

A disordered region spans residues 282–303; sequence SGRLIDHDESGSMEKKKREGYF.

It belongs to the PAPS reductase family. CysD subfamily. Heterodimer composed of CysD, the smaller subunit, and CysN.

The catalysed reaction is sulfate + ATP + H(+) = adenosine 5'-phosphosulfate + diphosphate. It participates in sulfur metabolism; hydrogen sulfide biosynthesis; sulfite from sulfate: step 1/3. Functionally, with CysN forms the ATP sulfurylase (ATPS) that catalyzes the adenylation of sulfate producing adenosine 5'-phosphosulfate (APS) and diphosphate, the first enzymatic step in sulfur assimilation pathway. APS synthesis involves the formation of a high-energy phosphoric-sulfuric acid anhydride bond driven by GTP hydrolysis by CysN coupled to ATP hydrolysis by CysD. In Maricaulis maris (strain MCS10) (Caulobacter maris), this protein is Sulfate adenylyltransferase subunit 2.